The chain runs to 111 residues: Large ribosomal subunit protein uL24 (111 aa).

It belongs to the universal ribosomal protein uL24 family. Part of the 50S ribosomal subunit.

Functionally, one of two assembly initiator proteins, it binds directly to the 5'-end of the 23S rRNA, where it nucleates assembly of the 50S subunit. Its function is as follows. One of the proteins that surrounds the polypeptide exit tunnel on the outside of the subunit. In Myxococcus xanthus (strain DK1622), this protein is Large ribosomal subunit protein uL24.